A 307-amino-acid polypeptide reads, in one-letter code: Glutaminase (307 aa).

S66, N117, E161, N168, Y192, Y243, and V261 together coordinate substrate.

Belongs to the glutaminase family. As to quaternary structure, homotetramer.

The enzyme catalyses L-glutamine + H2O = L-glutamate + NH4(+). This chain is Glutaminase, found in Serratia proteamaculans (strain 568).